Here is a 148-residue protein sequence, read N- to C-terminus: UPF0260 protein mll2411 (148 aa).

The protein belongs to the UPF0260 family.

This Mesorhizobium japonicum (strain LMG 29417 / CECT 9101 / MAFF 303099) (Mesorhizobium loti (strain MAFF 303099)) protein is UPF0260 protein mll2411.